We begin with the raw amino-acid sequence, 201 residues long: Imidazole glycerol phosphate synthase subunit HisH 1 (201 aa).

A Glutamine amidotransferase type-1 domain is found at 1–201; sequence MIALIDYKAG…LKLLENFARL (201 aa). The Nucleophile role is filled by Cys80. Active-site residues include His183 and Glu185.

Heterodimer of HisH and HisF.

It localises to the cytoplasm. The catalysed reaction is 5-[(5-phospho-1-deoxy-D-ribulos-1-ylimino)methylamino]-1-(5-phospho-beta-D-ribosyl)imidazole-4-carboxamide + L-glutamine = D-erythro-1-(imidazol-4-yl)glycerol 3-phosphate + 5-amino-1-(5-phospho-beta-D-ribosyl)imidazole-4-carboxamide + L-glutamate + H(+). The enzyme catalyses L-glutamine + H2O = L-glutamate + NH4(+). It functions in the pathway amino-acid biosynthesis; L-histidine biosynthesis; L-histidine from 5-phospho-alpha-D-ribose 1-diphosphate: step 5/9. Functionally, IGPS catalyzes the conversion of PRFAR and glutamine to IGP, AICAR and glutamate. The HisH subunit provides the glutamine amidotransferase activity that produces the ammonia necessary to HisF for the synthesis of IGP and AICAR. The chain is Imidazole glycerol phosphate synthase subunit HisH 1 (hisH1) from Campylobacter jejuni subsp. jejuni serotype O:23/36 (strain 81-176).